A 354-amino-acid chain; its full sequence is Uroporphyrinogen decarboxylase (354 aa).

Residues 25 to 29 (RQAGR), F44, D75, Y152, T207, and H330 each bind substrate.

Belongs to the uroporphyrinogen decarboxylase family. As to quaternary structure, homodimer.

The protein resides in the cytoplasm. The catalysed reaction is uroporphyrinogen III + 4 H(+) = coproporphyrinogen III + 4 CO2. The protein operates within porphyrin-containing compound metabolism; protoporphyrin-IX biosynthesis; coproporphyrinogen-III from 5-aminolevulinate: step 4/4. Catalyzes the decarboxylation of four acetate groups of uroporphyrinogen-III to yield coproporphyrinogen-III. In Xanthomonas axonopodis pv. citri (strain 306), this protein is Uroporphyrinogen decarboxylase.